The primary structure comprises 85 residues: Toxin Cll7 (85 aa).

Positions 1-19 are cleaved as a signal peptide; sequence MNSLLMITACLVLFGTVWA. Residues 20 to 83 enclose the LCN-type CS-alpha/beta domain; sequence KEGYLVNTYT…TWPLPNKTCG (64 aa). Intrachain disulfides connect Cys-31-Cys-82, Cys-35-Cys-58, Cys-44-Cys-63, and Cys-48-Cys-65.

Belongs to the long (4 C-C) scorpion toxin superfamily. Sodium channel inhibitor family. Beta subfamily. In terms of tissue distribution, expressed by the venom gland.

The protein resides in the secreted. In terms of biological role, beta toxins bind voltage-independently at site-4 of sodium channels (Nav) and shift the voltage of activation toward more negative potentials thereby affecting sodium channel activation and promoting spontaneous and repetitive firing. The protein is Toxin Cll7 of Centruroides limpidus (Mexican scorpion).